Here is a 571-residue protein sequence, read N- to C-terminus: Proline--tRNA ligase (571 aa).

It belongs to the class-II aminoacyl-tRNA synthetase family. ProS type 1 subfamily. In terms of assembly, homodimer.

The protein resides in the cytoplasm. It carries out the reaction tRNA(Pro) + L-proline + ATP = L-prolyl-tRNA(Pro) + AMP + diphosphate. Catalyzes the attachment of proline to tRNA(Pro) in a two-step reaction: proline is first activated by ATP to form Pro-AMP and then transferred to the acceptor end of tRNA(Pro). As ProRS can inadvertently accommodate and process non-cognate amino acids such as alanine and cysteine, to avoid such errors it has two additional distinct editing activities against alanine. One activity is designated as 'pretransfer' editing and involves the tRNA(Pro)-independent hydrolysis of activated Ala-AMP. The other activity is designated 'posttransfer' editing and involves deacylation of mischarged Ala-tRNA(Pro). The misacylated Cys-tRNA(Pro) is not edited by ProRS. This chain is Proline--tRNA ligase, found in Vibrio campbellii (strain ATCC BAA-1116).